The sequence spans 95 residues: Aspartyl/glutamyl-tRNA(Asn/Gln) amidotransferase subunit C (95 aa).

It belongs to the GatC family. As to quaternary structure, heterotrimer of A, B and C subunits.

It carries out the reaction L-glutamyl-tRNA(Gln) + L-glutamine + ATP + H2O = L-glutaminyl-tRNA(Gln) + L-glutamate + ADP + phosphate + H(+). It catalyses the reaction L-aspartyl-tRNA(Asn) + L-glutamine + ATP + H2O = L-asparaginyl-tRNA(Asn) + L-glutamate + ADP + phosphate + 2 H(+). Allows the formation of correctly charged Asn-tRNA(Asn) or Gln-tRNA(Gln) through the transamidation of misacylated Asp-tRNA(Asn) or Glu-tRNA(Gln) in organisms which lack either or both of asparaginyl-tRNA or glutaminyl-tRNA synthetases. The reaction takes place in the presence of glutamine and ATP through an activated phospho-Asp-tRNA(Asn) or phospho-Glu-tRNA(Gln). The protein is Aspartyl/glutamyl-tRNA(Asn/Gln) amidotransferase subunit C of Dehalococcoides mccartyi (strain CBDB1).